The chain runs to 290 residues: Phosphoribulokinase (290 aa).

12 to 20 provides a ligand contact to ATP; it reads GSSGAGTTS.

Belongs to the phosphoribulokinase family.

It carries out the reaction D-ribulose 5-phosphate + ATP = D-ribulose 1,5-bisphosphate + ADP + H(+). The protein operates within carbohydrate biosynthesis; Calvin cycle. This Nitrobacter vulgaris protein is Phosphoribulokinase (cbbP).